Reading from the N-terminus, the 227-residue chain is Ribonuclease 3 (227 aa).

Positions Ala-6 to Asp-128 constitute an RNase III domain. Position 41 (Glu-41) interacts with Mg(2+). Residue Asp-45 is part of the active site. The Mg(2+) site is built by Asp-114 and Glu-117. Glu-117 is an active-site residue. Residues Asp-155–Ser-225 form the DRBM domain. Residues Gly-203–Glu-212 show a composition bias toward basic and acidic residues. The tract at residues Gly-203–Lys-227 is disordered.

It belongs to the ribonuclease III family. In terms of assembly, homodimer. Mg(2+) serves as cofactor.

Its subcellular location is the cytoplasm. The catalysed reaction is Endonucleolytic cleavage to 5'-phosphomonoester.. Its function is as follows. Digests double-stranded RNA. Involved in the processing of primary rRNA transcript to yield the immediate precursors to the large and small rRNAs (23S and 16S). Processes some mRNAs, and tRNAs when they are encoded in the rRNA operon. Processes pre-crRNA and tracrRNA of type II CRISPR loci if present in the organism. This chain is Ribonuclease 3, found in Xylella fastidiosa (strain 9a5c).